The following is a 164-amino-acid chain: Pyruvoyl-dependent arginine decarboxylase (164 aa).

S52 carries the pyruvic acid (Ser) modification.

It belongs to the PdaD family. The cofactor is pyruvate.

It carries out the reaction L-arginine + H(+) = agmatine + CO2. This chain is Pyruvoyl-dependent arginine decarboxylase, found in Methanococcus maripaludis (strain C6 / ATCC BAA-1332).